Here is a 541-residue protein sequence, read N- to C-terminus: Chaperonin GroEL 2 (541 aa).

Residues 30–33 (TLGP), K51, 87–91 (DGTTT), G415, and D496 each bind ATP.

The protein belongs to the chaperonin (HSP60) family. Forms a cylinder of 14 subunits composed of two heptameric rings stacked back-to-back. Interacts with the co-chaperonin GroES.

Its subcellular location is the cytoplasm. It carries out the reaction ATP + H2O + a folded polypeptide = ADP + phosphate + an unfolded polypeptide.. Together with its co-chaperonin GroES, plays an essential role in assisting protein folding. The GroEL-GroES system forms a nano-cage that allows encapsulation of the non-native substrate proteins and provides a physical environment optimized to promote and accelerate protein folding. This Bradyrhizobium sp. (strain BTAi1 / ATCC BAA-1182) protein is Chaperonin GroEL 2.